The chain runs to 35 residues: Neurotoxin (35 aa).

Cystine bridges form between C7/C27, C14/C32, and C18/C34.

In terms of tissue distribution, expressed by the venom gland.

It is found in the secreted. Functionally, neurotoxin. Decreases the action potential of myelinated nerves in mice and frogs. This is Neurotoxin from Buthus sp. (strain IY-2001) (Scorpion).